The primary structure comprises 63 residues: Large ribosomal subunit protein uL30 (63 aa).

The protein belongs to the universal ribosomal protein uL30 family. As to quaternary structure, part of the 50S ribosomal subunit.

The polypeptide is Large ribosomal subunit protein uL30 (Natranaerobius thermophilus (strain ATCC BAA-1301 / DSM 18059 / JW/NM-WN-LF)).